A 473-amino-acid polypeptide reads, in one-letter code: ATP synthase subunit beta (473 aa).

153–160 (GGAGVGKT) provides a ligand contact to ATP.

It belongs to the ATPase alpha/beta chains family. In terms of assembly, F-type ATPases have 2 components, CF(1) - the catalytic core - and CF(0) - the membrane proton channel. CF(1) has five subunits: alpha(3), beta(3), gamma(1), delta(1), epsilon(1). CF(0) has three main subunits: a(1), b(2) and c(9-12). The alpha and beta chains form an alternating ring which encloses part of the gamma chain. CF(1) is attached to CF(0) by a central stalk formed by the gamma and epsilon chains, while a peripheral stalk is formed by the delta and b chains.

The protein resides in the cell inner membrane. It carries out the reaction ATP + H2O + 4 H(+)(in) = ADP + phosphate + 5 H(+)(out). In terms of biological role, produces ATP from ADP in the presence of a proton gradient across the membrane. The catalytic sites are hosted primarily by the beta subunits. This is ATP synthase subunit beta from Rickettsia bellii (strain RML369-C).